A 258-amino-acid polypeptide reads, in one-letter code: Phosphatidylglycerol--prolipoprotein diacylglyceryl transferase (258 aa).

7 helical membrane passes run 9–29 (ILIQ…ATGF), 53–73 (LLTY…TLIY), 90–110 (EGGL…WLFV), 117–139 (KFLW…IRLG), 169–189 (PVQL…LMLF), 198–218 (GFLF…IEYF), and 230–250 (LISV…VLML). R137 serves as a coordination point for a 1,2-diacyl-sn-glycero-3-phospho-(1'-sn-glycerol).

The protein belongs to the Lgt family.

It localises to the cell inner membrane. The catalysed reaction is L-cysteinyl-[prolipoprotein] + a 1,2-diacyl-sn-glycero-3-phospho-(1'-sn-glycerol) = an S-1,2-diacyl-sn-glyceryl-L-cysteinyl-[prolipoprotein] + sn-glycerol 1-phosphate + H(+). The protein operates within protein modification; lipoprotein biosynthesis (diacylglyceryl transfer). In terms of biological role, catalyzes the transfer of the diacylglyceryl group from phosphatidylglycerol to the sulfhydryl group of the N-terminal cysteine of a prolipoprotein, the first step in the formation of mature lipoproteins. The polypeptide is Phosphatidylglycerol--prolipoprotein diacylglyceryl transferase (Tolumonas auensis (strain DSM 9187 / NBRC 110442 / TA 4)).